Consider the following 456-residue polypeptide: N(6)-adenosine-methyltransferase non-catalytic subunit METTL14 (456 aa).

The tract at residues 45–76 (AETRETCRASYDTSAPNAKRKYQDEGETDEDK) is disordered. Interaction with METTL3 regions lie at residues 135–136 (RD) and 237–238 (SG). The positively charged region required for RNA-binding stretch occupies residues 245–254 (RVCLRKWGYR). 2 interaction with METTL3 regions span residues 255 to 258 (RCED) and 278 to 287 (KAVFQRTKEH). A positively charged region required for RNA-binding region spans residues 297–298 (KR). The segment at 308-312 (NVDID) is interaction with METTL3. The disordered stretch occupies residues 393 to 456 (ERLRPKSPPP…GAHRGGFPPR (64 aa)). Ser-399 is modified (phosphoserine). The segment covering 409–423 (GGGAPRGGGRGGTSA) has biased composition (gly residues). A compositionally biased stretch (basic and acidic residues) spans 425 to 440 (RGRERNRSNFRGERGG). The span at 441 to 450 (FRGGRGGAHR) shows a compositional bias: gly residues.

The protein belongs to the MT-A70-like family. In terms of assembly, heterodimer; heterodimerizes with METTL3 to form an antiparallel heterodimer that constitutes an active methyltransferase. Component of the WMM complex, a N6-methyltransferase complex composed of a catalytic subcomplex, named MAC, and of an associated subcomplex, named MACOM. The MAC subcomplex is composed of METTL3 and METTL14. The MACOM subcomplex is composed of WTAP, ZC3H13, CBLL1/HAKAI, VIRMA, and, in some cases of RBM15 (RBM15 or RBM15B).

It localises to the nucleus. Functionally, the METTL3-METTL14 heterodimer forms a N6-methyltransferase complex that methylates adenosine residues at the N(6) position of some mRNAs and regulates the circadian clock, differentiation of embryonic stem cells and cortical neurogenesis. In the heterodimer formed with METTL3, METTL14 constitutes the RNA-binding scaffold that recognizes the substrate rather than the catalytic core. N6-methyladenosine (m6A), which takes place at the 5'-[AG]GAC-3' consensus sites of some mRNAs, plays a role in mRNA stability and processing. M6A acts as a key regulator of mRNA stability by promoting mRNA destabilization and degradation. In embryonic stem cells (ESCs), m6A methylation of mRNAs encoding key naive pluripotency-promoting transcripts results in transcript destabilization. M6A regulates spermatogonial differentiation and meiosis and is essential for male fertility and spermatogenesis. M6A also regulates cortical neurogenesis: m6A methylation of transcripts related to transcription factors, neural stem cells, the cell cycle and neuronal differentiation during brain development promotes their destabilization and decay, promoting differentiation of radial glial cells. In Bos taurus (Bovine), this protein is N(6)-adenosine-methyltransferase non-catalytic subunit METTL14 (METTL14).